Consider the following 565-residue polypeptide: MELEYESKRPLYIPHAGPILLEFPLLNKGSAFSLEERDNFNLQGLLPDTVETIEEQAERAWRQYQDFRTNIDRHIYLRNIQDTNETLFYRLLAAHLAEMLPIIYTPTVGDACERFSDIYRRARGVFISYNNCDKIEDMLQNATKQNVKVIVVTDGERILGLGDQGIGGMGIPIGKLSLYTACGGISPAYTLPVVLDAGTNNQQLLNDPLYMGWRHPRITGEQYDKFVDAFIQAVKRRWPNVLLQFEDFAQKNATPLLNRYRSELCCFNDDIQGTAAVTLGCLLAASRAAGKRLRDQKVVFLGAGSAGCGIAEQITAEMRTEGLSEDEARRRVLMVDRFGLLTDKLANLLDFQSRLVQPSDSLSDWQLDSDTISLQDVVRNARPTVLIGVSGQPGLFTEEIIRDMHQHCERPIVMPLSNPTSRVEATPEDLLRWTDGAALVATGSPFAPVQFEGKTYPIAQCNNAYIFPGIGLGVLASGAGQITDAMLIAASRALADCSPLANGDGGALLPDINDIQSVSRVIAMAVAKAAQVHGVALVTSEETLSLAIEHNFWQPQYRDYRRTSF.

The active-site Proton donor is the Y104. R157 serves as a coordination point for NAD(+). K175 acts as the Proton acceptor in catalysis. Positions 246, 247, and 270 each coordinate a divalent metal cation. Residues D270 and N418 each contribute to the NAD(+) site.

It belongs to the malic enzymes family. Homotetramer. The cofactor is Mg(2+). It depends on Mn(2+) as a cofactor.

The enzyme catalyses (S)-malate + NAD(+) = pyruvate + CO2 + NADH. The catalysed reaction is oxaloacetate + H(+) = pyruvate + CO2. This is NAD-dependent malic enzyme from Sodalis glossinidius (strain morsitans).